The primary structure comprises 154 residues: MGLSDGEWQLVLNVWGKVEADLAGHGQDVLIRLFKGHPETLEKFDKFKHLKTEADMKASEDLKKHGNTVLTALGAILKKKGHHDAELKPLAQSHATKHKIPIKYLEFISEAIIHVLHSRHPAEFGADAQAAMNKALELFRKDIATKYKELGFHG.

The 147-residue stretch at 2 to 148 (GLSDGEWQLV…FRKDIATKYK (147 aa)) folds into the Globin domain. His65 is a binding site for nitrite. His65 serves as a coordination point for O2. Heme b is bound at residue His94.

It belongs to the globin family. In terms of assembly, monomeric.

It localises to the cytoplasm. The protein localises to the sarcoplasm. The enzyme catalyses Fe(III)-heme b-[protein] + nitric oxide + H2O = Fe(II)-heme b-[protein] + nitrite + 2 H(+). It catalyses the reaction H2O2 + AH2 = A + 2 H2O. In terms of biological role, monomeric heme protein which primary function is to store oxygen and facilitate its diffusion within muscle tissues. Reversibly binds oxygen through a pentacoordinated heme iron and enables its timely and efficient release as needed during periods of heightened demand. Depending on the oxidative conditions of tissues and cells, and in addition to its ability to bind oxygen, it also has a nitrite reductase activity whereby it regulates the production of bioactive nitric oxide. Under stress conditions, like hypoxia and anoxia, it also protects cells against reactive oxygen species thanks to its pseudoperoxidase activity. In Stenella attenuata (Pantropical spotted dolphin), this protein is Myoglobin-2 (MB2).